A 126-amino-acid polypeptide reads, in one-letter code: Aspartate 1-decarboxylase (126 aa).

The active-site Schiff-base intermediate with substrate; via pyruvic acid is serine 25. Serine 25 bears the Pyruvic acid (Ser) mark. Threonine 57 contributes to the substrate binding site. Tyrosine 58 (proton donor) is an active-site residue. Residue glycine 73–alanine 75 coordinates substrate.

The protein belongs to the PanD family. As to quaternary structure, heterooctamer of four alpha and four beta subunits. The cofactor is pyruvate. In terms of processing, is synthesized initially as an inactive proenzyme, which is activated by self-cleavage at a specific serine bond to produce a beta-subunit with a hydroxyl group at its C-terminus and an alpha-subunit with a pyruvoyl group at its N-terminus.

It is found in the cytoplasm. It carries out the reaction L-aspartate + H(+) = beta-alanine + CO2. The protein operates within cofactor biosynthesis; (R)-pantothenate biosynthesis; beta-alanine from L-aspartate: step 1/1. Catalyzes the pyruvoyl-dependent decarboxylation of aspartate to produce beta-alanine. This chain is Aspartate 1-decarboxylase, found in Psychrobacter sp. (strain PRwf-1).